The primary structure comprises 100 residues: Urease subunit gamma (100 aa).

This sequence belongs to the urease gamma subunit family. Heterotrimer of UreA (gamma), UreB (beta) and UreC (alpha) subunits. Three heterotrimers associate to form the active enzyme. The apoenzyme interacts with an accessory complex composed of UreD, UreF and UreG, which is required for the assembly of the nickel containing metallocenter of UreC. The UreE protein may also play a direct role as a metallochaperone in nickel transfer to the urease apoprotein.

It localises to the cytoplasm. The enzyme catalyses urea + 2 H2O + H(+) = hydrogencarbonate + 2 NH4(+). The protein operates within nitrogen metabolism; urea degradation; CO(2) and NH(3) from urea (urease route): step 1/1. The apoenzyme can be activated in vitro in the presence of nickel ions and carbon dioxide, which promotes carbamylation of 'Lys-217' of the UreC (alpha) subunit. The chain is Urease subunit gamma from Klebsiella aerogenes (Enterobacter aerogenes).